Here is a 103-residue protein sequence, read N- to C-terminus: Small ribosomal subunit protein uS10 (103 aa).

It belongs to the universal ribosomal protein uS10 family. In terms of assembly, part of the 30S ribosomal subunit.

In terms of biological role, involved in the binding of tRNA to the ribosomes. The protein is Small ribosomal subunit protein uS10 of Novosphingobium aromaticivorans (strain ATCC 700278 / DSM 12444 / CCUG 56034 / CIP 105152 / NBRC 16084 / F199).